We begin with the raw amino-acid sequence, 295 residues long: Tyrosine recombinase XerC (295 aa).

The region spanning 1-85 (MLTALNRYWD…ALRRFLSFLV (85 aa)) is the Core-binding (CB) domain. Residues 106 to 285 (HLPKNMDGEQ…NFQHLAEVYD (180 aa)) form the Tyr recombinase domain. Active-site residues include Arg-145, Lys-169, His-237, Arg-240, and His-263. Tyr-272 functions as the O-(3'-phospho-DNA)-tyrosine intermediate in the catalytic mechanism.

The protein belongs to the 'phage' integrase family. XerC subfamily. As to quaternary structure, forms a cyclic heterotetrameric complex composed of two molecules of XerC and two molecules of XerD.

The protein localises to the cytoplasm. In terms of biological role, site-specific tyrosine recombinase, which acts by catalyzing the cutting and rejoining of the recombining DNA molecules. The XerC-XerD complex is essential to convert dimers of the bacterial chromosome into monomers to permit their segregation at cell division. It also contributes to the segregational stability of plasmids. The protein is Tyrosine recombinase XerC of Haemophilus influenzae (strain PittEE).